The following is a 175-amino-acid chain: Cytochrome c-type biogenesis protein CcmE (175 aa).

The Cytoplasmic segment spans residues Met1–Lys8. A helical; Signal-anchor for type II membrane protein transmembrane segment spans residues Leu9–Ala29. Residues Ile30–Glu175 are Periplasmic-facing. 2 residues coordinate heme: His124 and Tyr128. The disordered stretch occupies residues Ala142–Glu175.

This sequence belongs to the CcmE/CycJ family.

The protein resides in the cell inner membrane. Functionally, heme chaperone required for the biogenesis of c-type cytochromes. Transiently binds heme delivered by CcmC and transfers the heme to apo-cytochromes in a process facilitated by CcmF and CcmH. In Psychrobacter sp. (strain PRwf-1), this protein is Cytochrome c-type biogenesis protein CcmE.